Consider the following 114-residue polypeptide: MVMQTMLRVLTVSLAFALTSYALPAAADEFEVTIHHVELQDPGLKAKVGDAISFVNHADISHNLYLTYEDGQVETLDTQPPRTTKRTVLKRAGHVVVRCWIHPIIRMEFDVAAK.

It functions in the pathway one-carbon metabolism; methylamine degradation. Functionally, probably involved in TTQ prosthetic group biosynthesis. This Methylorubrum extorquens (strain ATCC 14718 / DSM 1338 / JCM 2805 / NCIMB 9133 / AM1) (Methylobacterium extorquens) protein is Methylamine utilization protein MauL (mauL).